Reading from the N-terminus, the 215-residue chain is Large ribosomal subunit protein bL25 (215 aa).

Residues 1-10 are compositionally biased toward polar residues; it reads MAKSASNQLR. 2 disordered regions span residues 1–25 and 187–215; these read MAKSASNQLRVTVRTETGKGASRRA and ELEGEVAGAEEAEEAAVEAGEAEAAGESE.

It belongs to the bacterial ribosomal protein bL25 family. CTC subfamily. Part of the 50S ribosomal subunit; part of the 5S rRNA/L5/L18/L25 subcomplex. Contacts the 5S rRNA. Binds to the 5S rRNA independently of L5 and L18.

This is one of the proteins that binds to the 5S RNA in the ribosome where it forms part of the central protuberance. The sequence is that of Large ribosomal subunit protein bL25 from Mycobacterium bovis (strain ATCC BAA-935 / AF2122/97).